A 128-amino-acid polypeptide reads, in one-letter code: Small ribosomal subunit protein uS9c (128 aa).

It belongs to the universal ribosomal protein uS9 family.

The protein localises to the plastid. In Euglena longa (Euglenophycean alga), this protein is Small ribosomal subunit protein uS9c (rps9).